A 360-amino-acid chain; its full sequence is MKDSIIAKLESLKERYEELEALLGDVSVISDQDKFRAYSKEYSQLEEVVKCFNRWTQLNQNIEEAEILLDDPEMKEMAQMEIEESKAEIEEVEQQLQILLLPKDPNDEYNCYLEIRAGTGGDEAGIFAGDLFRMYSRYAESKRWRVEMLSANESEQGGYKEVIVKVTGEGVYGQLKFESGGHRVQRVPKTESQGRIHTSACTVAVMPELPESEMPEINPADLRIDTYRSSGAGGQHVNTTDSAVRITHIPTGIVVECQDERSQHKNKAKAMSVLASRIVQAEQERQAAEQTDMRRNLLGSGDRSDKIRTYNYPQGRVTDHRINLTIYRLDEVMNGKIDELIQPIITEYQADQLAALSEQN.

An N5-methylglutamine modification is found at Gln-235. Positions 285-295 (RQAAEQTDMRR) are enriched in basic and acidic residues. Residues 285-309 (RQAAEQTDMRRNLLGSGDRSDKIRT) form a disordered region.

The protein belongs to the prokaryotic/mitochondrial release factor family. In terms of processing, methylated by PrmC. Methylation increases the termination efficiency of RF1.

The protein resides in the cytoplasm. Its function is as follows. Peptide chain release factor 1 directs the termination of translation in response to the peptide chain termination codons UAG and UAA. In Haemophilus influenzae (strain ATCC 51907 / DSM 11121 / KW20 / Rd), this protein is Peptide chain release factor 1 (prfA).